A 369-amino-acid chain; its full sequence is Endophilin-A (369 aa).

The BAR domain maps to 18-248; the sequence is TEKMGGAEGT…LQEKRSEAES (231 aa). Residues 227–247 adopt a coiled-coil conformation; sequence QCADVLRGLQETLQEKRSEAE. Residues 266-295 form a disordered region; sequence GGGGGLNEDGTPSHISSSASPLPSPMRSPA. A compositionally biased stretch (low complexity) spans 277-294; that stretch reads PSHISSSASPLPSPMRSP. The SH3 domain maps to 305–364; the sequence is QQQPCCQALYDFEPENPGELAFKENDIITLLNRVDDNWFEGAVNGRTGYFPQSYVQVQVP.

This sequence belongs to the endophilin family.

It is found in the cytoplasm. Its subcellular location is the membrane. Required presynaptically at the neuromuscular junction. Implicated in synaptic vesicle endocytosis. This Drosophila erecta (Fruit fly) protein is Endophilin-A.